Reading from the N-terminus, the 304-residue chain is UDP-3-O-acyl-N-acetylglucosamine deacetylase (304 aa).

Positions 77, 233, and 237 each coordinate Zn(2+). Residue His-260 is the Proton donor of the active site.

It belongs to the LpxC family. It depends on Zn(2+) as a cofactor.

It carries out the reaction a UDP-3-O-[(3R)-3-hydroxyacyl]-N-acetyl-alpha-D-glucosamine + H2O = a UDP-3-O-[(3R)-3-hydroxyacyl]-alpha-D-glucosamine + acetate. It participates in glycolipid biosynthesis; lipid IV(A) biosynthesis; lipid IV(A) from (3R)-3-hydroxytetradecanoyl-[acyl-carrier-protein] and UDP-N-acetyl-alpha-D-glucosamine: step 2/6. Functionally, catalyzes the hydrolysis of UDP-3-O-myristoyl-N-acetylglucosamine to form UDP-3-O-myristoylglucosamine and acetate, the committed step in lipid A biosynthesis. This chain is UDP-3-O-acyl-N-acetylglucosamine deacetylase, found in Lawsonia intracellularis (strain PHE/MN1-00).